The chain runs to 294 residues: Probable 2-(5''-triphosphoribosyl)-3'-dephosphocoenzyme-A synthase (294 aa).

Belongs to the CitG/MdcB family.

The enzyme catalyses 3'-dephospho-CoA + ATP = 2'-(5''-triphospho-alpha-D-ribosyl)-3'-dephospho-CoA + adenine. The chain is Probable 2-(5''-triphosphoribosyl)-3'-dephosphocoenzyme-A synthase from Streptococcus pyogenes serotype M49 (strain NZ131).